Reading from the N-terminus, the 663-residue chain is Alcohol oxidase 1 (663 aa).

FAD is bound at residue 8–38 (DILVLGGGSSGSCIAGRLANLDHSLKVGLIE). Histidine 567 (proton acceptor) is an active-site residue. Positions 661–663 (ARF) match the Microbody targeting signal motif.

This sequence belongs to the GMC oxidoreductase family. In terms of assembly, homooctamer. Requires FAD as cofactor.

Its subcellular location is the peroxisome matrix. The enzyme catalyses a primary alcohol + O2 = an aldehyde + H2O2. Its pathway is energy metabolism; methane degradation. Major isoform of alcohol oxidase, which catalyzes the oxidation of methanol to formaldehyde and hydrogen peroxide, the first step in the methanol utilization pathway of methylotrophic yeasts. The polypeptide is Alcohol oxidase 1 (AOX1) (Komagataella phaffii (strain ATCC 76273 / CBS 7435 / CECT 11047 / NRRL Y-11430 / Wegner 21-1) (Yeast)).